A 323-amino-acid polypeptide reads, in one-letter code: NADH-ubiquinone oxidoreductase chain 1 (323 aa).

The next 8 helical transmembrane spans lie at 9–29 (ILNP…LTLI), 76–96 (LFVL…PMPM), 107–127 (ILFV…SGWA), 145–165 (ISYE…SGGF), 175–195 (EATW…ISTL), 227–247 (LFFL…AVLF), 258–278 (EFTS…FLWV), and 298–318 (FLPL…ACAG).

The protein belongs to the complex I subunit 1 family.

The protein resides in the mitochondrion inner membrane. The catalysed reaction is a ubiquinone + NADH + 5 H(+)(in) = a ubiquinol + NAD(+) + 4 H(+)(out). Core subunit of the mitochondrial membrane respiratory chain NADH dehydrogenase (Complex I) that is believed to belong to the minimal assembly required for catalysis. Complex I functions in the transfer of electrons from NADH to the respiratory chain. The immediate electron acceptor for the enzyme is believed to be ubiquinone. The sequence is that of NADH-ubiquinone oxidoreductase chain 1 (MT-ND1) from Gadus morhua (Atlantic cod).